Here is a 212-residue protein sequence, read N- to C-terminus: NAD(P)H-hydrate epimerase (212 aa).

A YjeF N-terminal domain is found at 10-212 (MRSLERAAIA…IGVIVKPIGL (203 aa)). 65-69 (NNGGD) is a binding site for (6S)-NADPHX. Positions 66 and 129 each coordinate K(+). (6S)-NADPHX-binding positions include 133-139 (GLGLTRP) and aspartate 161. Residue serine 164 participates in K(+) binding.

It belongs to the NnrE/AIBP family. It depends on K(+) as a cofactor.

The catalysed reaction is (6R)-NADHX = (6S)-NADHX. It catalyses the reaction (6R)-NADPHX = (6S)-NADPHX. In terms of biological role, catalyzes the epimerization of the S- and R-forms of NAD(P)HX, a damaged form of NAD(P)H that is a result of enzymatic or heat-dependent hydration. This is a prerequisite for the S-specific NAD(P)H-hydrate dehydratase to allow the repair of both epimers of NAD(P)HX. This chain is NAD(P)H-hydrate epimerase, found in Rhodobacter capsulatus (strain ATCC BAA-309 / NBRC 16581 / SB1003).